A 161-amino-acid chain; its full sequence is SsrA-binding protein (161 aa).

The protein belongs to the SmpB family.

The protein localises to the cytoplasm. In terms of biological role, required for rescue of stalled ribosomes mediated by trans-translation. Binds to transfer-messenger RNA (tmRNA), required for stable association of tmRNA with ribosomes. tmRNA and SmpB together mimic tRNA shape, replacing the anticodon stem-loop with SmpB. tmRNA is encoded by the ssrA gene; the 2 termini fold to resemble tRNA(Ala) and it encodes a 'tag peptide', a short internal open reading frame. During trans-translation Ala-aminoacylated tmRNA acts like a tRNA, entering the A-site of stalled ribosomes, displacing the stalled mRNA. The ribosome then switches to translate the ORF on the tmRNA; the nascent peptide is terminated with the 'tag peptide' encoded by the tmRNA and targeted for degradation. The ribosome is freed to recommence translation, which seems to be the essential function of trans-translation. This is SsrA-binding protein from Baumannia cicadellinicola subsp. Homalodisca coagulata.